The primary structure comprises 172 residues: MLTEVMEVWHGLVIAVVSLFLQACFLTAINYLLSRHMAHKSEQILKAASLQVPRPSPGHHHPPAVKEMKETQTERDIPMSDSLYRHDSDTPSDSLDSSCSSPPACQATEDVDYTQVVFSDPGELKNDSPLDYENIKEITDYVNVNPERHKPSFWYFVNPALSEPAEYDQVAM.

A helical transmembrane segment spans residues 9 to 29 (WHGLVIAVVSLFLQACFLTAI). The segment at 52–106 (VPRPSPGHHHPPAVKEMKETQTERDIPMSDSLYRHDSDTPSDSLDSSCSSPPACQ) is disordered. Basic and acidic residues predominate over residues 64–89 (AVKEMKETQTERDIPMSDSLYRHDSD). A compositionally biased stretch (low complexity) spans 91–103 (PSDSLDSSCSSPP). 2 positions are modified to phosphotyrosine: Tyr132 and Tyr141.

In terms of assembly, interacts with EPOR; this interaction occurs in a erythropoietin (EPO)-dependent manner. Interacts with JAK2; this interaction occurs in a erythropoietin (EPO)-dependent manner. Interacts (via tyrosine-phosphorylated form) with GRB2. In terms of processing, phosphorylated. Phosphorylation on Tyr-132 and Tyr-141 occurs in a erythropoietin (EPO)-dependent manner. Expressed in the proerythroblasts (at protein level). Expressed strongly in the kidney. Expressed weakly in the pancreas, liver and lung. Expressed strongly in erythroid progenitor cells (EPCs). Expressed weakly in T-cells and neutrophils.

Its subcellular location is the cell membrane. Acts as a signaling transduction factor of the EPO-EPOR signaling pathway promoting erythroid cell differentiation. The polypeptide is Regulator of hemoglobinization and erythroid cell expansion protein (Homo sapiens (Human)).